Reading from the N-terminus, the 345-residue chain is Transcription factor 19 (345 aa).

In terms of domain architecture, FHA spans 31–88; it reads YRLGHRADLCDVALRPQQEPGLISGIHAELHAEPRGDDWRVSLEDHSSQGTLVNNVRL. Ser-78 is subject to Phosphoserine. Disordered regions lie at residues 147 to 167 and 190 to 227; these read AGFRPMLPSQGAPQRPLSTLS and LTFSPSWGGPKSLPVPAPPGEVGTTPSAPPQRNRRKSV. A PHD-type zinc finger spans residues 293–342; it reads AAPCCCLPQEETVAWVQCDGCDVWFHVACVGCSIQAAREADFRCPGCRAG. Positions 296, 298, 310, 313, 318, 321, 336, and 339 each coordinate Zn(2+).

Its subcellular location is the nucleus. In terms of biological role, potential transcription factor that may play a role in the regulation of genes involved in cell cycle G1/S transition. May bind to regulatory elements of genes, including the promoter of the transcription factor FOXO1. This is Transcription factor 19 (TCF19) from Pan troglodytes (Chimpanzee).